Consider the following 199-residue polypeptide: ATP-dependent Clp protease proteolytic subunit (199 aa).

The Nucleophile role is filled by S99. Residue H124 is part of the active site.

Belongs to the peptidase S14 family. As to quaternary structure, fourteen ClpP subunits assemble into 2 heptameric rings which stack back to back to give a disk-like structure with a central cavity, resembling the structure of eukaryotic proteasomes.

The protein localises to the cytoplasm. The catalysed reaction is Hydrolysis of proteins to small peptides in the presence of ATP and magnesium. alpha-casein is the usual test substrate. In the absence of ATP, only oligopeptides shorter than five residues are hydrolyzed (such as succinyl-Leu-Tyr-|-NHMec, and Leu-Tyr-Leu-|-Tyr-Trp, in which cleavage of the -Tyr-|-Leu- and -Tyr-|-Trp bonds also occurs).. Functionally, cleaves peptides in various proteins in a process that requires ATP hydrolysis. Has a chymotrypsin-like activity. Plays a major role in the degradation of misfolded proteins. In Moorella thermoacetica (strain ATCC 39073 / JCM 9320), this protein is ATP-dependent Clp protease proteolytic subunit.